The sequence spans 334 residues: Ribonucleoside-diphosphate reductase small chain (334 aa).

Aspartate 77, glutamate 108, and histidine 111 together coordinate Fe cation. Tyrosine 115 is a catalytic residue. Fe cation contacts are provided by glutamate 171, glutamate 205, and histidine 208.

It belongs to the ribonucleoside diphosphate reductase small chain family. As to quaternary structure, heterotetramer composed of a homodimer of the large subunit (R1) and a homodimer of the small subunit (R2). Larger multisubunit protein complex are also active, composed of (R1)n(R2)n. Fe cation serves as cofactor.

The catalysed reaction is a 2'-deoxyribonucleoside 5'-diphosphate + [thioredoxin]-disulfide + H2O = a ribonucleoside 5'-diphosphate + [thioredoxin]-dithiol. Its function is as follows. Ribonucleoside-diphosphate reductase holoenzyme provides the precursors necessary for viral DNA synthesis. Allows virus growth in non-dividing cells. Catalyzes the biosynthesis of deoxyribonucleotides from the corresponding ribonucleotides. In Ornithodoros (relapsing fever ticks), this protein is Ribonucleoside-diphosphate reductase small chain.